A 178-amino-acid chain; its full sequence is Ribosome maturation factor RimM (178 aa).

A PRC barrel domain is found at 103–177; it reads SKDEYYFFEI…KIVVKVPEWL (75 aa).

This sequence belongs to the RimM family. Binds ribosomal protein uS19.

The protein resides in the cytoplasm. An accessory protein needed during the final step in the assembly of 30S ribosomal subunit, possibly for assembly of the head region. Essential for efficient processing of 16S rRNA. May be needed both before and after RbfA during the maturation of 16S rRNA. It has affinity for free ribosomal 30S subunits but not for 70S ribosomes. The chain is Ribosome maturation factor RimM from Thermosipho africanus (strain TCF52B).